An 85-amino-acid chain; its full sequence is Large ribosomal subunit protein bL31B (85 aa).

This sequence belongs to the bacterial ribosomal protein bL31 family. Type B subfamily. As to quaternary structure, part of the 50S ribosomal subunit.

The polypeptide is Large ribosomal subunit protein bL31B (Bifidobacterium longum subsp. infantis (strain ATCC 15697 / DSM 20088 / JCM 1222 / NCTC 11817 / S12)).